The primary structure comprises 359 residues: Uroporphyrinogen decarboxylase (359 aa).

Substrate-binding positions include Arg36 to Arg40, Asp85, Tyr160, Ser215, and His338.

The protein belongs to the uroporphyrinogen decarboxylase family. Homodimer.

It localises to the cytoplasm. The catalysed reaction is uroporphyrinogen III + 4 H(+) = coproporphyrinogen III + 4 CO2. The protein operates within porphyrin-containing compound metabolism; protoporphyrin-IX biosynthesis; coproporphyrinogen-III from 5-aminolevulinate: step 4/4. Functionally, catalyzes the decarboxylation of four acetate groups of uroporphyrinogen-III to yield coproporphyrinogen-III. This chain is Uroporphyrinogen decarboxylase, found in Corynebacterium efficiens (strain DSM 44549 / YS-314 / AJ 12310 / JCM 11189 / NBRC 100395).